Here is a 105-residue protein sequence, read N- to C-terminus: UPF0235 protein RAF_ORF1191 (105 aa).

It belongs to the UPF0235 family.

In Rickettsia africae (strain ESF-5), this protein is UPF0235 protein RAF_ORF1191.